A 628-amino-acid polypeptide reads, in one-letter code: MLNRMKSARPKSVAPKSGQALLTLGALGVVFGDIGTSPLYSLHTAFSMQHNKVEVTPENVYGIISMVLWTITLIVTVKYVMLVTRADNQGQGGILALVALLKNRGHWGKFVAVAGMLGAALFYGDVVITPAISVLSATEGLTVISPSFERFILPISLAVLIAIFAIQPLGTEKVGKAFGPIMLLWFVTLAGLGIPQIIVHPEILQSLSPHWALGLIVAEPFQAFVLLGAVVLTVTGAEALYADMGHFGARPIRVAWFCVVMPALILTYLGQGALVINQPEAVRNPMFYLAPEGLRIPLVILATIATVIASQAVISGAYSLTKQAVNLKLLPRMVIRHTSRKEEGQIYMPLVNGLLFVSVMVVVLVFRSSESLASAYGLAVTGTLVLVSVLYLIYVHTTWWKTALFIVFIGIPEVLLFASNTTKIHDGGWLPLLTAAVLIVVMRTWEWGSDRVNQERAELELPMDKFLEKLDQPHNIGLRKVAEVAVFPHGTSDTVPLSLVRCVKDLKLLYREIVIVRIVQEHVPHVPPAERAEMEVLHHAPIRVVRVDLHLGYFDEQNLPENLHAIDPTWDNATYFLSALTLRSRLPGKIAGWRDRLYLSMERNQASRTESFKLQPSKTITVGTELHL.

12 helical membrane-spanning segments follow: residues 20-40 (ALLTLGALGVVFGDIGTSPLY), 63-83 (IISMVLWTITLIVTVKYVMLV), 110-130 (FVAVAGMLGAALFYGDVVITP), 151-171 (FILPISLAVLIAIFAIQPLGT), 178-198 (FGPIMLLWFVTLAGLGIPQII), 212-232 (ALGLIVAEPFQAFVLLGAVVL), 256-276 (WFCVVMPALILTYLGQGALVI), 296-316 (IPLVILATIATVIASQAVISG), 346-366 (IYMPLVNGLLFVSVMVVVLVF), 375-395 (AYGLAVTGTLVLVSVLYLIYV), 398-418 (TWWKTALFIVFIGIPEVLLFA), and 422-442 (TKIHDGGWLPLLTAAVLIVVM).

This sequence belongs to the HAK/KUP transporter (TC 2.A.72) family.

Its subcellular location is the cell membrane. The catalysed reaction is K(+)(in) + H(+)(in) = K(+)(out) + H(+)(out). Transport of potassium into the cell. Likely operates as a K(+):H(+) symporter. The polypeptide is Probable potassium transport system protein Kup (Corynebacterium glutamicum (strain R)).